Here is a 1877-residue protein sequence, read N- to C-terminus: MLGSSVKSVQPEVELSSGGGDEGADEPRGAGRKAAAADGRGMLPKRAKAPGGGGGMAKASAAELKVFKSGSVDSRVPGGPPASNLRKQKSLTNLSFLTDSEKKLQLYEPEWSDDMAKAPKGLGKVGSKGREAPLMSKTLSKSEHSLFQAKGSPAGGAKTPLAPLAPNLGKPSRIPRGPYAEVKPLSKAPEAAVSEDGKSDDELLSSKAKAQKSSGPVPSAKGQEERAFLKVDPELVVTVLGDLEQLLFSQMLDPESQRKRTVQNVLDLRQNLEETMSSLRGSQVTHSSLEMTCYDSDDANPRSVSSLSNRSSPLSWRYGQSSPRLQAGDAPSVGGSCRSEGTPAWYMHGERAHYSHTMPMRSPSKLSHISRLELVESLDSDEVDLKSGYMSDSDLMGKTMTEDDDITTGWDESSSISSGLSDASDNLSSEEFNASSSLNSLPSTPTASRRNSTIVLRTDSEKRSLAESGLSWFSESEEKAPKKLEYDSGSLKMEPGTSKWRRERPESCDDSSKGGELKKPISLGHPGSLKKGKTPPVAVTSPITHTAQSALKVAGKPEGKATDKGKLAVKNTGLQRSSSDAGRDRLSDAKKPPSGIARPSTSGSFGYKKPPPATGTATVMQTGGSATLSKIQKSSGIPVKPVNGRKTSLDVSNSAEPGFLAPGARSNIQYRSLPRPAKSSSMSVTGGRGGPRPVSSSIDPSLLSTKQGGLTPSRLKEPTKVASGRTTPAPVNQTDREKEKAKAKAVALDSDNISLKSIGSPESTPKNQASHPTATKLAELPPTPLRATAKSFVKPPSLANLDKVNSNSLDLPSSSDTTHASKVPDLHATSSASGGPLPSCFTPSPAPILNINSASFSQGLELMSGFSVPKETRMYPKLSGLHRSMESLQMPMSLPSAFPSSTPVPTPPAPPAAPTEEETEELTWSGSPRAGQLDSNQRDRNTLPKKGLRYQLQSQEETKERRHSHTIGGLPESDDQSELPSPPALPMSLSAKGQLTNIVSPTAATTPRITRSNSIPTHEAAFELYSGSQMGSTLSLAERPKGMIRSGSFRDPTDDVHGSVLSLASSASSTYSSAEERMQSEQIRKLRRELESSQEKVATLTSQLSANANLVAAFEQSLVNMTSRLRHLAETAEEKDTELLDLRETIDFLKKKNSEAQAVIQGALNASETTPKELRIKRQNSSDSISSLNSITSHSSIGSSKDADAKKKKKKSWVYELRSSFNKAFSIKKGPKSASSYSDIEEIATPDSSAPSSPKLQHGSTETASPSIKSSTSSSVGTDVTEGPAHPAPHTRLFHANEEEEPEKKEVSELRSELWEKEMKLTDIRLEALNSAHQLDQLRETMHNMQLEVDLLKAENDRLKVAPGPSSGSTPGQVPGSSALSSPRRSLGLALTHSFGPSLADTDLSPMDGISTCGPKEEVTLRVVVRMPPQHIIKGDLKQQEFFLGCSKVSGKVDWKMLDEAVFQVFKDYISKMDPASTLGLSTESIHGYSISHVKRVLDAEPPEMPPCRRGVNNISVSLKGLKEKCVDSLVFETLIPKPMMQHYISLLLKHRRLVLSGPSGTGKTYLTNRLAEYLVERSGREVTEGIVSTFNMHQQSCKDLQLYLSNLANQIDRETGIGDVPLVILLDDLSEAGSISELVNGALTCKYHKCPYIIGTTNQPVKMTPNHGLHLSFRMLTFSNNVEPANGFLVRYLRRKLVESDSDINANKEELLRVLDWVPKLWYHLHTFLEKHSTSDFLIGPCFFLSCPIGIEDFRTWFIDLWNNSIIPYLQEGAKDGIKVHGQKAAWEDPVEWVRDTLPWPSAQQDQSKLYHLPPPTVGPHSIASPPEDRTVKDSTPSSLDSDPLMAMLLKLQEAANYIESPDRETILDPNLQATL.

Methionine 1 carries the N-acetylmethionine modification. The disordered stretch occupies residues 1-59 (MLGSSVKSVQPEVELSSGGGDEGADEPRGAGRKAAAADGRGMLPKRAKAPGGGGGMAKA). Over residues 32-41 (RKAAAADGRG) the composition is skewed to low complexity. 3 positions are modified to phosphoserine: serine 90, serine 142, and serine 152. The segment at 114 to 225 (DMAKAPKGLG…PVPSAKGQEE (112 aa)) is disordered. Threonine 159 carries the post-translational modification Phosphothreonine. A phosphoserine mark is found at serine 194 and serine 199. Low complexity predominate over residues 205 to 214 (SSKAKAQKSS). Residues 255 to 280 (ESQRKRTVQNVLDLRQNLEETMSSLR) are a coiled coil. The segment at 294–336 (YDSDDANPRSVSSLSNRSSPLSWRYGQSSPRLQAGDAPSVGGS) is disordered. Serine 296, serine 308, serine 312, serine 362, and serine 391 each carry phosphoserine. Low complexity predominate over residues 301–315 (PRSVSSLSNRSSPLS). Disordered stretches follow at residues 386–839 (KSGY…PLPS) and 892–989 (MSLP…PMSL). Composition is skewed to low complexity over residues 411–425 (DESS…DASD) and 433–448 (NASS…PTAS). Phosphoserine is present on residues serine 452, serine 474, serine 476, and serine 490. Residues 476–486 (SEEKAPKKLEY) are compositionally biased toward basic and acidic residues. Positions 503 to 519 (ERPESCDDSSKGGELKK) are enriched in basic and acidic residues. Residue serine 528 is modified to Phosphoserine. Residue threonine 534 is modified to Phosphothreonine. At serine 541 the chain carries Phosphoserine. Threonine 544 carries the post-translational modification Phosphothreonine. The segment covering 555 to 566 (GKPEGKATDKGK) has biased composition (basic and acidic residues). The residue at position 572 (threonine 572) is a Phosphothreonine. Over residues 581 to 591 (AGRDRLSDAKK) the composition is skewed to basic and acidic residues. Polar residues-rich tracts occupy residues 615 to 635 (GTAT…QKSS) and 645 to 655 (RKTSLDVSNSA). The residue at position 648 (serine 648) is a Phosphoserine. At arginine 688 the chain carries Omega-N-methylarginine. Composition is skewed to polar residues over residues 698 to 710 (IDPS…QGGL) and 724 to 733 (GRTTPAPVNQ). A coiled-coil region spans residues 731-756 (VNQTDREKEKAKAKAVALDSDNISLK). A phosphoserine mark is found at serine 750, serine 754, serine 760, serine 797, and serine 808. Residues 751–773 (DNISLKSIGSPESTPKNQASHPT) are compositionally biased toward polar residues. Positions 805-818 (NSNSLDLPSSSDTT) are enriched in low complexity. Residues 902–913 (TPVPTPPAPPAA) show a composition bias toward pro residues. Serine 1000 bears the Phosphoserine mark. Threonine 1006 carries the post-translational modification Phosphothreonine. Residues 1072-1163 (SSAEERMQSE…SEAQAVIQGA (92 aa)) are a coiled coil. Phosphothreonine is present on threonine 1170. Disordered regions lie at residues 1172–1204 (KELR…KDAD), 1244–1306 (ATPD…EKKE), 1359–1383 (LKVA…LSSP), and 1810–1843 (KLYH…SLDS). Serine 1181 carries the phosphoserine modification. The segment covering 1181 to 1200 (SSDSISSLNSITSHSSIGSS) has biased composition (low complexity). Residues 1246–1264 (PDSSAPSSPKLQHGSTETA) show a composition bias toward polar residues. Residue serine 1265 is modified to Phosphoserine. Residues 1265–1275 (SPSIKSSTSSS) are compositionally biased toward low complexity. Residues 1303–1362 (EKKEVSELRSELWEKEMKLTDIRLEALNSAHQLDQLRETMHNMQLEVDLLKAENDRLKVA) adopt a coiled-coil conformation. Positions 1366–1383 (SSGSTPGQVPGSSALSSP) are enriched in polar residues. Serine 1382 carries the post-translational modification Phosphoserine.

The protein belongs to the Nav/unc-53 family. As to quaternary structure, interacts with tubulin. In terms of tissue distribution, broadly expressed at low levels. Expressed at high levels in heart, skeletal muscle and placenta.

It is found in the cytoplasm. The protein localises to the cytoskeleton. Its function is as follows. May be involved in neuronal migration. The protein is Neuron navigator 1 (NAV1) of Homo sapiens (Human).